A 264-amino-acid polypeptide reads, in one-letter code: Thymidylate synthase (264 aa).

Arginine 21 serves as a coordination point for dUMP. Histidine 51 serves as a coordination point for (6R)-5,10-methylene-5,6,7,8-tetrahydrofolate. Position 126–127 (126–127 (RR)) interacts with dUMP. The Nucleophile role is filled by cysteine 146. Residues 166 to 169 (RSCD), asparagine 177, and 207 to 209 (HLY) contribute to the dUMP site. Residue aspartate 169 participates in (6R)-5,10-methylene-5,6,7,8-tetrahydrofolate binding. Position 263 (alanine 263) interacts with (6R)-5,10-methylene-5,6,7,8-tetrahydrofolate.

It belongs to the thymidylate synthase family. Bacterial-type ThyA subfamily. Homodimer.

Its subcellular location is the cytoplasm. It catalyses the reaction dUMP + (6R)-5,10-methylene-5,6,7,8-tetrahydrofolate = 7,8-dihydrofolate + dTMP. The protein operates within pyrimidine metabolism; dTTP biosynthesis. In terms of biological role, catalyzes the reductive methylation of 2'-deoxyuridine-5'-monophosphate (dUMP) to 2'-deoxythymidine-5'-monophosphate (dTMP) while utilizing 5,10-methylenetetrahydrofolate (mTHF) as the methyl donor and reductant in the reaction, yielding dihydrofolate (DHF) as a by-product. This enzymatic reaction provides an intracellular de novo source of dTMP, an essential precursor for DNA biosynthesis. The protein is Thymidylate synthase of Pectobacterium carotovorum subsp. carotovorum (strain PC1).